Here is a 339-residue protein sequence, read N- to C-terminus: Cathepsin L-like peptidase (339 aa).

An N-terminal signal peptide occupies residues 1–16; that stretch reads MKILILLVAFVAAANA. Positions 17–121 are cleaved as a propeptide — activation peptide; that stretch reads VSLYELVKEE…VTFIEPANVE (105 aa). Residue Asn95 is glycosylated (N-linked (GlcNAc...) asparagine). 3 cysteine pairs are disulfide-bonded: Cys143–Cys186, Cys177–Cys219, and Cys278–Cys328. The active site involves Cys146. Catalysis depends on residues His285 and Asn306.

It belongs to the peptidase C1 family. Dimer of a heavy and a light chain linked by disulfide bonds. Interacts with cystatin; the interaction results in inhibition of cathepsin L-like peptidase activity. As to expression, salivary gland. Midgut.

It carries out the reaction Specificity close to that of papain. As compared to cathepsin B, cathepsin L exhibits higher activity toward protein substrates, but has little activity on Z-Arg-Arg-NHMec, and no peptidyl-dipeptidase activity.. More active in the presence of a reducing agent DTT. Functionally, proteinase exhibiting preference for Leu, Val and Phe residues at the P2 position. The sequence is that of Cathepsin L-like peptidase from Aedes aegypti (Yellowfever mosquito).